The following is a 581-amino-acid chain: Proline--tRNA ligase (581 aa).

The protein belongs to the class-II aminoacyl-tRNA synthetase family. ProS type 1 subfamily. Homodimer.

It is found in the cytoplasm. It catalyses the reaction tRNA(Pro) + L-proline + ATP = L-prolyl-tRNA(Pro) + AMP + diphosphate. Catalyzes the attachment of proline to tRNA(Pro) in a two-step reaction: proline is first activated by ATP to form Pro-AMP and then transferred to the acceptor end of tRNA(Pro). As ProRS can inadvertently accommodate and process non-cognate amino acids such as alanine and cysteine, to avoid such errors it has two additional distinct editing activities against alanine. One activity is designated as 'pretransfer' editing and involves the tRNA(Pro)-independent hydrolysis of activated Ala-AMP. The other activity is designated 'posttransfer' editing and involves deacylation of mischarged Ala-tRNA(Pro). The misacylated Cys-tRNA(Pro) is not edited by ProRS. The sequence is that of Proline--tRNA ligase from Chlamydia trachomatis serovar D (strain ATCC VR-885 / DSM 19411 / UW-3/Cx).